The sequence spans 548 residues: Dihydroxy-acid dehydratase (548 aa).

A Mg(2+)-binding site is contributed by Asp78. Cys119 provides a ligand contact to [2Fe-2S] cluster. Mg(2+) contacts are provided by Asp120 and Lys121. Lys121 carries the N6-carboxylysine modification. Cys185 is a [2Fe-2S] cluster binding site. Position 438 (Glu438) interacts with Mg(2+). The Proton acceptor role is filled by Ser464.

The protein belongs to the IlvD/Edd family. Homodimer. Requires [2Fe-2S] cluster as cofactor. It depends on Mg(2+) as a cofactor.

The catalysed reaction is (2R)-2,3-dihydroxy-3-methylbutanoate = 3-methyl-2-oxobutanoate + H2O. The enzyme catalyses (2R,3R)-2,3-dihydroxy-3-methylpentanoate = (S)-3-methyl-2-oxopentanoate + H2O. The protein operates within amino-acid biosynthesis; L-isoleucine biosynthesis; L-isoleucine from 2-oxobutanoate: step 3/4. Its pathway is amino-acid biosynthesis; L-valine biosynthesis; L-valine from pyruvate: step 3/4. Its function is as follows. Functions in the biosynthesis of branched-chain amino acids. Catalyzes the dehydration of (2R,3R)-2,3-dihydroxy-3-methylpentanoate (2,3-dihydroxy-3-methylvalerate) into 2-oxo-3-methylpentanoate (2-oxo-3-methylvalerate) and of (2R)-2,3-dihydroxy-3-methylbutanoate (2,3-dihydroxyisovalerate) into 2-oxo-3-methylbutanoate (2-oxoisovalerate), the penultimate precursor to L-isoleucine and L-valine, respectively. This chain is Dihydroxy-acid dehydratase, found in Methanothrix thermoacetophila (strain DSM 6194 / JCM 14653 / NBRC 101360 / PT) (Methanosaeta thermophila).